The chain runs to 508 residues: Maturase K (508 aa).

It belongs to the intron maturase 2 family. MatK subfamily.

It localises to the plastid. The protein resides in the chloroplast. Usually encoded in the trnK tRNA gene intron. Probably assists in splicing its own and other chloroplast group II introns. The chain is Maturase K from Coronilla varia (Crown vetch).